The chain runs to 363 residues: Putative glutamate--cysteine ligase 2 (363 aa).

It belongs to the glutamate--cysteine ligase type 2 family. YbdK subfamily.

The enzyme catalyses L-cysteine + L-glutamate + ATP = gamma-L-glutamyl-L-cysteine + ADP + phosphate + H(+). Its function is as follows. ATP-dependent carboxylate-amine ligase which exhibits weak glutamate--cysteine ligase activity. The protein is Putative glutamate--cysteine ligase 2 of Streptomyces coelicolor (strain ATCC BAA-471 / A3(2) / M145).